We begin with the raw amino-acid sequence, 409 residues long: Odorant receptor 35a (409 aa).

At 1-35 (MVRYVPRFADGQKVKLAWPLAVFRLNHIFWPLDPS) the chain is on the cytoplasmic side. Residues 36-56 (TGKWGRYLDKVLAVAMSLVFM) traverse the membrane as a helical segment. Over 57 to 64 (QHNDAELR) the chain is Extracellular. A helical transmembrane segment spans residues 65–85 (YLRFEASNRNLDAFLTGMPTY). Residues 86–139 (LILVEAQFRSLHILLHFEKLQKFLEIFYANIYIDPRKEPEMFRKVDGKMIINRL) lie on the Cytoplasmic side of the membrane. The chain crosses the membrane as a helical span at residues 140 to 160 (VSAMYGAVISLYLIAPVFSII). An N-linked (GlcNAc...) asparagine glycan is attached at Asn161. Residues 161–177 (NQSKDFLYSMIFPFDSD) lie on the Extracellular side of the membrane. The helical transmembrane segment at 178 to 198 (PLYIFVPLLLTNVWVGIVIDT) threads the bilayer. Topologically, residues 199–273 (MMFGETNLLC…QQLEAQYTVR (75 aa)) are cytoplasmic. A helical transmembrane segment spans residues 274 to 294 (VFIMFAFAAGLLCALSFKAYT). Residues 295–302 (NPMANYIY) lie on the Extracellular side of the membrane. The helical transmembrane segment at 303–323 (AIWFGAKTVELLSLGQIGSDL) threads the bilayer. Over 324-379 (AFTTDSLSTMYYLTHWEQILQYSTNPSENLRLLKLINLAIEMNSKPFYVTGLKYFR) the chain is Cytoplasmic. A helical transmembrane segment spans residues 380–400 (VSLQAGLKILQASFSYFTFLT). At 401–409 (SMQRRQMSN) the chain is on the extracellular side.

The protein belongs to the insect chemoreceptor superfamily. Heteromeric odorant receptor channel (TC 1.A.69) family. Or1a subfamily. As to quaternary structure, interacts with Orco. Complexes exist early in the endomembrane system in olfactory sensory neurons (OSNs), coupling these complexes to the conserved ciliary trafficking pathway. As to expression, expressed in ac3B olfactory sensory neurons in the antenna.

The protein localises to the cell membrane. Functionally, odorant receptor which mediates acceptance or avoidance behavior, depending on its substrates. The odorant receptor repertoire encodes a large collection of odor stimuli that vary widely in identity, intensity, and duration. Forms a complex with Orco to form odorant-sensing units, providing sensitive and prolonged odorant signaling and calcium permeability. Involved in the behavioral responses to esters. Involved in the behavioral responses to butanol, pentanol, hexanol, octanol, propyl acetate, and butyl acetate. The chain is Odorant receptor 35a (Or35a) from Drosophila melanogaster (Fruit fly).